A 433-amino-acid polypeptide reads, in one-letter code: Sulfhydrylase FUB7 (433 aa).

Lysine 211 is subject to N6-(pyridoxal phosphate)lysine.

The protein belongs to the trans-sulfuration enzymes family. The cofactor is pyridoxal 5'-phosphate.

Its pathway is mycotoxin biosynthesis. Sulfhydrylase; part of the gene cluster that mediates the biosynthesis of fusaric acid, a mycotoxin with low to moderate toxicity to animals and humans, but with high phytotoxic properties. L-aspartate is suggested as fusaric acid amino acid precursor that is activated and further processed to O-acetyl-L-homoserine by cluster enzymes aspartate kinase FUB3 and homoserine O-acetyltransferase FUB5, as well as enzymes of the primary metabolism. The polyketide synthase (PKS) FUB1 generates the triketide trans-2-hexenal which is presumptively released by the hydrolase FUB4 and linked to the NRPS-bound amino acid precursor by NAD(P)-dependent dehydrogenase FUB6. FUB1, FUB4, and the non-canonical NRPS Fub8 may form an enzyme complex. Further processing of the NRPS-bound intermediate might be carried out by FUB6 and the sulfhydrylase FUB7, enabling a spontaneous electrocyclization to close the carbon backbone of fusaric acid. Dihydrofusaric acid is likely to be released via reduction by the thioester reductase (TR) domain of FUB8 whereupon the final oxidation to fusaric acid may (also) be performed by the FMN-dependent dehydrogenase FUB9. This chain is Sulfhydrylase FUB7, found in Fusarium oxysporum f. sp. lycopersici (strain 4287 / CBS 123668 / FGSC 9935 / NRRL 34936) (Fusarium vascular wilt of tomato).